Consider the following 128-residue polypeptide: Sulfurtransferase TusD (128 aa).

Catalysis depends on Cys78, which acts as the Cysteine persulfide intermediate.

Belongs to the DsrE/TusD family. As to quaternary structure, heterohexamer, formed by a dimer of trimers. The hexameric TusBCD complex contains 2 copies each of TusB, TusC and TusD. The TusBCD complex interacts with TusE.

It is found in the cytoplasm. Its function is as follows. Part of a sulfur-relay system required for 2-thiolation of 5-methylaminomethyl-2-thiouridine (mnm(5)s(2)U) at tRNA wobble positions. Accepts sulfur from TusA and transfers it in turn to TusE. This is Sulfurtransferase TusD from Escherichia coli O45:K1 (strain S88 / ExPEC).